The following is a 504-amino-acid chain: ATP synthase subunit alpha 2 (504 aa).

Residue 169–176 (GDRQTGKT) coordinates ATP.

It belongs to the ATPase alpha/beta chains family. In terms of assembly, F-type ATPases have 2 components, CF(1) - the catalytic core - and CF(0) - the membrane proton channel. CF(1) has five subunits: alpha(3), beta(3), gamma(1), delta(1), epsilon(1). CF(0) has three main subunits: a(1), b(2) and c(9-12). The alpha and beta chains form an alternating ring which encloses part of the gamma chain. CF(1) is attached to CF(0) by a central stalk formed by the gamma and epsilon chains, while a peripheral stalk is formed by the delta and b chains.

It is found in the cell membrane. It catalyses the reaction ATP + H2O + 4 H(+)(in) = ADP + phosphate + 5 H(+)(out). In terms of biological role, produces ATP from ADP in the presence of a proton gradient across the membrane. The alpha chain is a regulatory subunit. This chain is ATP synthase subunit alpha 2, found in Listeria monocytogenes serotype 4b (strain F2365).